We begin with the raw amino-acid sequence, 471 residues long: 3-isopropylmalate dehydratase large subunit (471 aa).

Residues Cys-349, Cys-409, and Cys-412 each coordinate [4Fe-4S] cluster.

It belongs to the aconitase/IPM isomerase family. LeuC type 1 subfamily. As to quaternary structure, heterodimer of LeuC and LeuD. [4Fe-4S] cluster is required as a cofactor.

It catalyses the reaction (2R,3S)-3-isopropylmalate = (2S)-2-isopropylmalate. It participates in amino-acid biosynthesis; L-leucine biosynthesis; L-leucine from 3-methyl-2-oxobutanoate: step 2/4. Functionally, catalyzes the isomerization between 2-isopropylmalate and 3-isopropylmalate, via the formation of 2-isopropylmaleate. This Aliivibrio salmonicida (strain LFI1238) (Vibrio salmonicida (strain LFI1238)) protein is 3-isopropylmalate dehydratase large subunit.